The primary structure comprises 228 residues: Ribulose-phosphate 3-epimerase (228 aa).

Substrate is bound at residue S11. Residues H36, D38, and H69 each contribute to the a divalent metal cation site. D38 functions as the Proton acceptor in the catalytic mechanism. Residues H69, 145–148 (GFCG), 180–182 (DGG), and 202–203 (AS) each bind substrate. D180 contributes to the a divalent metal cation binding site. D180 serves as the catalytic Proton donor.

It belongs to the ribulose-phosphate 3-epimerase family. It depends on a divalent metal cation as a cofactor.

It carries out the reaction D-ribulose 5-phosphate = D-xylulose 5-phosphate. The protein operates within carbohydrate degradation. In terms of biological role, catalyzes the reversible epimerization of D-ribulose 5-phosphate to D-xylulose 5-phosphate. In Chlamydia muridarum (strain MoPn / Nigg), this protein is Ribulose-phosphate 3-epimerase.